The following is an 89-amino-acid chain: Ubiquinol-cytochrome-c reductase complex assembly factor 3 (89 aa).

Residues 1–7 (MEVARKA) are Mitochondrial matrix-facing. Residues 8-28 (LVAVAVLGGGAGVGSILFALV) traverse the membrane as a helical segment. The tract at residues 23–80 (ILFALVTPGELQKQSMLQEMPERDSRRRDEAVRTTELVMATLKDAAATKENVAWRRNW) is mediates lipid-binding. Topologically, residues 29–89 (TPGELQKQSM…WTVSGDGRSA (61 aa)) are mitochondrial intermembrane.

The protein belongs to the UQCC3 family. As to quaternary structure, associates with the ubiquinol-cytochrome c reductase complex (mitochondrial respiratory chain complex III(CIII) or cytochrome b-c1 complex). Interacts with UQCC1. Forms a complex, named COMC, composed of UQCC1, UQCC2; UQCC3 and UQCC4; mediates MT-CYB hemylation and association with the first nuclear-encoded complex III subunit UQCRQ. Post-translationally, probably cleaved by OMA1 under mitochondrial stress conditions.

The protein localises to the mitochondrion inner membrane. Its function is as follows. Required for the assembly of the ubiquinol-cytochrome c reductase complex (mitochondrial respiratory chain complex III or cytochrome b-c1 complex), mediating cytochrome b recruitment and probably stabilization within the complex. Thereby, plays an important role in ATP production by mitochondria. Cardiolipin-binding protein, it may also control the cardiolipin composition of mitochondria membranes and their morphology. This Mus musculus (Mouse) protein is Ubiquinol-cytochrome-c reductase complex assembly factor 3.